A 750-amino-acid chain; its full sequence is Photosystem I P700 chlorophyll a apoprotein A1 (750 aa).

Helical transmembrane passes span 70 to 93 (VFSA…FHGA), 156 to 179 (LYCT…FHYH), 195 to 219 (LNHH…HVSL), 291 to 309 (IAHH…GHMY), 346 to 369 (WHAQ…HHMY), 385 to 411 (LSLF…IFMV), 433 to 455 (AIIS…LYIH), and 531 to 549 (FLVH…LILL). The [4Fe-4S] cluster site is built by cysteine 573 and cysteine 582. 2 helical membrane-spanning segments follow: residues 589–610 (HVFL…HFSW) and 664–686 (LSAY…MFLF). Chlorophyll a' is bound at residue histidine 675. Chlorophyll a is bound by residues methionine 683 and tyrosine 691. Residue tryptophan 692 coordinates phylloquinone. The chain crosses the membrane as a helical span at residues 724–744 (AVGVTHYLLGGIATTWAFFLA).

This sequence belongs to the PsaA/PsaB family. In terms of assembly, the PsaA/B heterodimer binds the P700 chlorophyll special pair and subsequent electron acceptors. PSI consists of a core antenna complex that captures photons, and an electron transfer chain that converts photonic excitation into a charge separation. The eukaryotic PSI reaction center is composed of at least 11 subunits. It depends on P700 is a chlorophyll a/chlorophyll a' dimer, A0 is one or more chlorophyll a, A1 is one or both phylloquinones and FX is a shared 4Fe-4S iron-sulfur center. as a cofactor.

The protein resides in the plastid. It is found in the chloroplast thylakoid membrane. The enzyme catalyses reduced [plastocyanin] + hnu + oxidized [2Fe-2S]-[ferredoxin] = oxidized [plastocyanin] + reduced [2Fe-2S]-[ferredoxin]. In terms of biological role, psaA and PsaB bind P700, the primary electron donor of photosystem I (PSI), as well as the electron acceptors A0, A1 and FX. PSI is a plastocyanin-ferredoxin oxidoreductase, converting photonic excitation into a charge separation, which transfers an electron from the donor P700 chlorophyll pair to the spectroscopically characterized acceptors A0, A1, FX, FA and FB in turn. Oxidized P700 is reduced on the lumenal side of the thylakoid membrane by plastocyanin. The sequence is that of Photosystem I P700 chlorophyll a apoprotein A1 from Eucalyptus globulus subsp. globulus (Tasmanian blue gum).